We begin with the raw amino-acid sequence, 570 residues long: Pleckstrin homology domain-containing family D member 1 (570 aa).

The span at 1–13 (MTTKTTPKELKAK) shows a compositional bias: basic and acidic residues. A disordered region spans residues 1-42 (MTTKTTPKELKAKKESKKKGSAPEPPKNGPPRTSPPNTIEKK). The segment covering 23 to 34 (PEPPKNGPPRTS) has biased composition (pro residues). The 110-residue stretch at 83–192 (GVQNYGILMK…WLKALRSATK (110 aa)) folds into the PH domain. A coiled-coil region spans residues 202–448 (ETMIRELENR…TGAQMTELQE (247 aa)). Positions 542–551 (SKRGIRSSFR) are enriched in basic residues. The disordered stretch occupies residues 542–570 (SKRGIRSSFRKKTDSITTQPREKEPLMQL). Residues 561-570 (PREKEPLMQL) show a composition bias toward basic and acidic residues.

It belongs to the PLEKHD1 family.

The chain is Pleckstrin homology domain-containing family D member 1 from Caenorhabditis elegans.